A 365-amino-acid polypeptide reads, in one-letter code: Dehydroprecondylocarpine acetate synthase (365 aa).

Positions 105, 108, 111, and 119 each coordinate Zn(2+). 2 N-linked (GlcNAc...) asparagine glycosylation sites follow: Asn-142 and Asn-147. 12 residues coordinate NADP(+): Leu-194, Gly-196, Leu-197, Ser-216, Thr-217, Thr-218, Lys-221, Leu-279, Ala-281, Ser-303, Ala-305, and Arg-350.

It belongs to the zinc-containing alcohol dehydrogenase family. In terms of assembly, homodimer. Interaction with catharanthine synthase (CS) and tabersonine synthase (TS). Requires Zn(2+) as cofactor.

Its subcellular location is the cytoplasm. It localises to the cytosol. It catalyses the reaction dihydroprecondylocarpine acetate + NADP(+) = precondylocarpine acetate + NADPH + H(+). It functions in the pathway alkaloid biosynthesis. Functionally, component of the seco-iridoid and derivatives monoterpenoid indole alkaloids (MIAs, e.g. vinblastine, catharanthine, tabersonine, vincadifformine, vindoline, vincristine, quinine and strychnine) biosynthesis pathway. Catalyzes the non-canonical 1,4-reduction of an alpha,beta-unsaturated iminium moiety; by contrast with the classic alcohol dehydrogenase mechanism, this reaction does not require a catalytic zinc or proton relay. Converts precondylocarpine acetate to dihydroprecondylocarpine acetate, that is spontaneously converted into dehydrosecodine intermediate, precursor of angryline. May also trigger the non-stereoselective 1,4-reduction reaction at C15 of dehydrosecodine leading to the production of secodine, a precursor of vincadifformine. The sequence is that of Dehydroprecondylocarpine acetate synthase from Catharanthus roseus (Madagascar periwinkle).